The sequence spans 297 residues: Bifunctional protein FolD (297 aa).

Residues 164–166 (GRS), S193, and I234 contribute to the NADP(+) site.

The protein belongs to the tetrahydrofolate dehydrogenase/cyclohydrolase family. As to quaternary structure, homodimer.

The catalysed reaction is (6R)-5,10-methylene-5,6,7,8-tetrahydrofolate + NADP(+) = (6R)-5,10-methenyltetrahydrofolate + NADPH. The enzyme catalyses (6R)-5,10-methenyltetrahydrofolate + H2O = (6R)-10-formyltetrahydrofolate + H(+). Its pathway is one-carbon metabolism; tetrahydrofolate interconversion. Its function is as follows. Catalyzes the oxidation of 5,10-methylenetetrahydrofolate to 5,10-methenyltetrahydrofolate and then the hydrolysis of 5,10-methenyltetrahydrofolate to 10-formyltetrahydrofolate. This is Bifunctional protein FolD from Halobacterium salinarum (strain ATCC 700922 / JCM 11081 / NRC-1) (Halobacterium halobium).